The primary structure comprises 278 residues: Achaete-scute homolog 5 (278 aa).

Residues 1–66 are disordered; sequence MPMGAAERGA…GPFGGGLALG (66 aa). A bHLH domain is found at 155 to 207; sequence AFIQKRNERERQRVKCVNEGYARLRGHLPGALAEKRLSKVETLRAAIRYIKYL. The interval 214–278 is disordered; that stretch reads APDGSTPPAS…PFLESEESWH (65 aa). Pro residues predominate over residues 230-239; sequence GPCPAPPATP. Residues 240–249 show a composition bias toward basic and acidic residues; sequence RPDRPGDGEA. Over residues 252 to 271 the composition is skewed to low complexity; the sequence is PSSLVPESSESSCFSPSPFL.

Interacts with transcription factor TCF3/E12.

The protein localises to the nucleus. Transcription factor. Probably binds E-box motifs 5'-CANNTG-3' in complex with transcription factor TCF3/E12. Negatively modulates transcription of target genes such as CDH1/E-cadherin, perhaps by recruiting the PRC2 repressive complex to regulatory elements. Regulates ameloblast development and tooth germ growth, perhaps acting by positively modulating migration of inner enamel epithelium (IEE) cells. Plays a role in enamel formation. The protein is Achaete-scute homolog 5 (ASCL5) of Homo sapiens (Human).